We begin with the raw amino-acid sequence, 274 residues long: Octanoyltransferase LipM (274 aa).

The BPL/LPL catalytic domain maps to 31–245; sequence GEVPPTLRLY…GFAEALGARL (215 aa). Residue Cys-147 is the Acyl-thioester intermediate of the active site.

This sequence belongs to the octanoyltransferase LipM family. In terms of assembly, monomer.

It carries out the reaction octanoyl-[ACP] + L-lysyl-[protein] = N(6)-octanoyl-L-lysyl-[protein] + holo-[ACP] + H(+). It functions in the pathway protein modification; protein lipoylation via endogenous pathway; protein N(6)-(lipoyl)lysine from octanoyl-[acyl-carrier-protein]. Functionally, catalyzes the transfer of endogenously produced octanoic acid from octanoyl-acyl-carrier-protein onto the lipoyl domain of GcvH, an intermediate carrier during protein lipoylation. This chain is Octanoyltransferase LipM, found in Kyrpidia tusciae (strain DSM 2912 / NBRC 15312 / T2) (Bacillus tusciae).